Here is a 413-residue protein sequence, read N- to C-terminus: Probable tRNA pseudouridine synthase D (413 aa).

Asp97 functions as the Nucleophile in the catalytic mechanism. The TRUD domain maps to 167 to 370 (AVPNYYGYQR…YGSYRRARLE (204 aa)).

The protein belongs to the pseudouridine synthase TruD family.

It carries out the reaction uridine(13) in tRNA = pseudouridine(13) in tRNA. Its function is as follows. Could be responsible for synthesis of pseudouridine from uracil-13 in transfer RNAs. The chain is Probable tRNA pseudouridine synthase D from Pyrobaculum arsenaticum (strain DSM 13514 / JCM 11321 / PZ6).